A 638-amino-acid chain; its full sequence is Guanylate-binding protein 7 (638 aa).

The interval Met1–Cys310 is GTPase domain (Globular). Residues Thr35–Lys277 form the GB1/RHD3-type G domain. GTP is bound by residues Gly45–Ser52, Leu67–Thr69, and Asp97–Leu101. The segment at Leu311 to Leu638 is interaction with the CYBA-CYBB complex. Residues Ser590 to Leu638 are C-terminal tail; required for its localization to cytoplasmic vesicle.

It belongs to the TRAFAC class dynamin-like GTPase superfamily. GB1/RHD3 GTPase family. GB1 subfamily. Monomer and dimer. Interacts with CYBA, CYBA-CYBB complex and ATG4B. Interacts (via GB1/RHD3-type G domain) with NCF2 and NCF2-NCF4 complex.

It is found in the cytoplasmic vesicle membrane. It catalyses the reaction GTP + H2O = GDP + phosphate + H(+). The catalysed reaction is GDP + H2O = GMP + phosphate + H(+). With respect to regulation, inhibited by orthovanadate, berylium fluoride and aluminum flouride. Its function is as follows. Interferon (IFN)-inducible GTPase that plays important roles in innate immunity against a diverse range of bacterial, viral and protozoan pathogens. Hydrolyzes GTP to GMP in two consecutive cleavage reactions and predominantly uses GTP and not GDP or GMP as the substrate. Following infection, recruited to the pathogen-containing vacuoles or vacuole-escaped bacteria and acts as a positive regulator of inflammasome assembly by promoting the release of inflammasome ligands from bacteria. Acts by promoting lysis of pathogen-containing vacuoles, releasing pathogens into the cytosol. Following pathogen release in the cytosol, promotes recruitment of proteins that mediate bacterial cytolysis, such as Gm12250/Irgb10: this liberates ligands that are detected by inflammasomes, such as lipopolysaccharide (LPS) that activates the non-canonical CASP4/CASP11 inflammasome or double-stranded DNA (dsDNA) that activates the AIM2 inflammasome. Also promotes IFN-gamma-mediated host defense against bacterial infections by regulating oxidative responses and bacteriolytic peptide generation. May help to assemble NADPH oxidase on phagosomal membranes by acting as a bridging protein between NADPH oxidase cytosolic subunits NCF2-NCF4 and the membrane subunits CYBA-CYBB. Participates along with GBP1 in trafficking monoubiquinated protein cargo to autolysosomes for generating ubiquitin-derived antimicrobial peptides. Facilitates influenza A virus replication by inhibiting the activation of NF-kappaB and JAK-STAT signaling pathways and the expression of type I, type III interferons and pro-inflammatory cytokines. Confers protection to several pathogens, including the bacterial pathogens Listeria monocytogenes and Mycobacterium bovis BCG as well as the protozoan pathogen Toxoplasma gondii. Required for disruption of the parasitophorous vacuole formed following T.gondii infection and subsequent killing of the parasite. The chain is Guanylate-binding protein 7 (Gbp7) from Mus musculus (Mouse).